Reading from the N-terminus, the 394-residue chain is Phosphoglycerate kinase (394 aa).

Substrate is bound by residues Asp-21 to Asn-23, Arg-36, His-59 to Arg-62, Arg-118, and Arg-151. Phosphoserine is present on Ser-183. 2 residues coordinate ATP: Lys-201 and Gly-292. The residue at position 299 (Thr-299) is a Phosphothreonine. ATP contacts are provided by residues Glu-323 and Gly-350–Ser-353.

It belongs to the phosphoglycerate kinase family. Monomer.

It is found in the cytoplasm. The enzyme catalyses (2R)-3-phosphoglycerate + ATP = (2R)-3-phospho-glyceroyl phosphate + ADP. It participates in carbohydrate degradation; glycolysis; pyruvate from D-glyceraldehyde 3-phosphate: step 2/5. This chain is Phosphoglycerate kinase, found in Bacillus mycoides (strain KBAB4) (Bacillus weihenstephanensis).